We begin with the raw amino-acid sequence, 868 residues long: Leucine-rich repeat receptor-like serine/threonine-protein kinase At2g14510 (868 aa).

Positions 1–23 (METRNKFMLLACATFSIMSLVKS) are cleaved as a signal peptide. Over 24–510 (QNQQGFISLD…KHQPKSWLVA (487 aa)) the chain is Extracellular. Residues Asn48, Asn68, Asn231, Asn235, Asn258, Asn291, Asn433, and Asn446 are each glycosylated (N-linked (GlcNAc...) asparagine). 3 LRR repeats span residues 412–435 (RIIS…QNLT), 436–458 (MLRE…LATI), and 460–482 (PLLV…LQDR). Asn495 is a glycosylation site (N-linked (GlcNAc...) asparagine). A helical membrane pass occupies residues 511-531 (IVASISCVAVTIIVLVLIFIF). Over 532-868 (RRRKSSTRKV…TFISDIPSAR (337 aa)) the chain is Cytoplasmic. Positions 563–832 (NNFEVVLGKG…NMTRVAHELN (270 aa)) constitute a Protein kinase domain. Residues 569–577 (LGKGGFGVV) and Lys590 contribute to the ATP site. Tyr635 bears the Phosphotyrosine mark. Asp687 acts as the Proton acceptor in catalysis. Ser721 bears the Phosphoserine mark. Residues Thr722 and Thr727 each carry the phosphothreonine modification. Residue Tyr735 is modified to Phosphotyrosine.

Belongs to the protein kinase superfamily. Ser/Thr protein kinase family.

It localises to the cell membrane. It catalyses the reaction L-seryl-[protein] + ATP = O-phospho-L-seryl-[protein] + ADP + H(+). The enzyme catalyses L-threonyl-[protein] + ATP = O-phospho-L-threonyl-[protein] + ADP + H(+). This Arabidopsis thaliana (Mouse-ear cress) protein is Leucine-rich repeat receptor-like serine/threonine-protein kinase At2g14510.